The chain runs to 262 residues: Tryptophan synthase alpha chain (262 aa).

Active-site proton acceptor residues include Glu-49 and Asp-60.

This sequence belongs to the TrpA family. As to quaternary structure, tetramer of two alpha and two beta chains.

It catalyses the reaction (1S,2R)-1-C-(indol-3-yl)glycerol 3-phosphate + L-serine = D-glyceraldehyde 3-phosphate + L-tryptophan + H2O. It functions in the pathway amino-acid biosynthesis; L-tryptophan biosynthesis; L-tryptophan from chorismate: step 5/5. Its function is as follows. The alpha subunit is responsible for the aldol cleavage of indoleglycerol phosphate to indole and glyceraldehyde 3-phosphate. The protein is Tryptophan synthase alpha chain of Caldanaerobacter subterraneus subsp. tengcongensis (strain DSM 15242 / JCM 11007 / NBRC 100824 / MB4) (Thermoanaerobacter tengcongensis).